The sequence spans 132 residues: Small ribosomal subunit protein uS8c (132 aa).

Belongs to the universal ribosomal protein uS8 family. Part of the 30S ribosomal subunit.

Its subcellular location is the plastid. The protein resides in the chloroplast. Its function is as follows. One of the primary rRNA binding proteins, it binds directly to 16S rRNA central domain where it helps coordinate assembly of the platform of the 30S subunit. In Chaetosphaeridium globosum (Charophycean green alga), this protein is Small ribosomal subunit protein uS8c (rps8).